A 258-amino-acid polypeptide reads, in one-letter code: Malonyl-[acyl-carrier protein] O-methyltransferase (258 aa).

Belongs to the methyltransferase superfamily.

The enzyme catalyses malonyl-[ACP] + S-adenosyl-L-methionine = malonyl-[ACP] methyl ester + S-adenosyl-L-homocysteine. It participates in cofactor biosynthesis; biotin biosynthesis. Its function is as follows. Converts the free carboxyl group of a malonyl-thioester to its methyl ester by transfer of a methyl group from S-adenosyl-L-methionine (SAM). It allows to synthesize pimeloyl-ACP via the fatty acid synthetic pathway. In Hamiltonella defensa subsp. Acyrthosiphon pisum (strain 5AT), this protein is Malonyl-[acyl-carrier protein] O-methyltransferase.